The following is a 36-amino-acid chain: U14-ctenitoxin-Co1b (36 aa).

Expressed by the venom gland.

It localises to the secreted. Functionally, not toxic to mice by intracerebroventricular injection. The sequence is that of U14-ctenitoxin-Co1b from Ctenus ornatus (Brazilian spider).